A 324-amino-acid polypeptide reads, in one-letter code: tRNA uridine(34) hydroxylase (324 aa).

The 95-residue stretch at asparagine 145–leucine 239 folds into the Rhodanese domain. Cysteine 199 serves as the catalytic Cysteine persulfide intermediate.

The protein belongs to the TrhO family.

It carries out the reaction uridine(34) in tRNA + AH2 + O2 = 5-hydroxyuridine(34) in tRNA + A + H2O. Catalyzes oxygen-dependent 5-hydroxyuridine (ho5U) modification at position 34 in tRNAs. In Buchnera aphidicola subsp. Acyrthosiphon pisum (strain Tuc7), this protein is tRNA uridine(34) hydroxylase.